A 182-amino-acid polypeptide reads, in one-letter code: PRA1 family protein D (182 aa).

N-acetylalanine is present on Ala-2. Transmembrane regions (helical) follow at residues 68 to 88 (LITR…WFFL), 107 to 127 (IVAV…GVWL), and 129 to 149 (ALTT…LRGT). Residues 163–182 (PMLSTSGGGNDGARGDYSGI) form a disordered region.

Belongs to the PRA1 family. In terms of assembly, interacts with PRA1F2 and PRA1F3. Interacts with the cauliflower mosaic virus (CaMV) movement protein (via N-terminus). In terms of tissue distribution, expressed in hypocotyls, roots, lateral roots, lateral root caps, columella cells, leaves, shoot apex, stems and flowers.

It localises to the endosome membrane. Functionally, may be involved in both secretory and endocytic intracellular trafficking in the endosomal/prevacuolar compartments. The sequence is that of PRA1 family protein D (PRA1D) from Arabidopsis thaliana (Mouse-ear cress).